A 139-amino-acid polypeptide reads, in one-letter code: HTH-type transcriptional repressor Mb2911 (139 aa).

An HTH marR-type domain is found at 6-138; it reads DAPLGYLLYR…FKRMLEKLGS (133 aa).

As to quaternary structure, homodimer.

Its function is as follows. Represses expression of the HQNO methyltransferase htm gene by binding to its promoter region. The chain is HTH-type transcriptional repressor Mb2911 from Mycobacterium bovis (strain ATCC BAA-935 / AF2122/97).